We begin with the raw amino-acid sequence, 239 residues long: 2-C-methyl-D-erythritol 4-phosphate cytidylyltransferase (239 aa).

Belongs to the IspD/TarI cytidylyltransferase family. IspD subfamily.

It carries out the reaction 2-C-methyl-D-erythritol 4-phosphate + CTP + H(+) = 4-CDP-2-C-methyl-D-erythritol + diphosphate. It participates in isoprenoid biosynthesis; isopentenyl diphosphate biosynthesis via DXP pathway; isopentenyl diphosphate from 1-deoxy-D-xylulose 5-phosphate: step 2/6. In terms of biological role, catalyzes the formation of 4-diphosphocytidyl-2-C-methyl-D-erythritol from CTP and 2-C-methyl-D-erythritol 4-phosphate (MEP). This chain is 2-C-methyl-D-erythritol 4-phosphate cytidylyltransferase, found in Acinetobacter baylyi (strain ATCC 33305 / BD413 / ADP1).